We begin with the raw amino-acid sequence, 379 residues long: Caffeyl-CoA reductase-Etf complex subunit CarC (379 aa).

Residues 122 to 131 (FALTEPGAGS) and 155 to 157 (FIT) contribute to the FAD site. S131 lines the substrate pocket. Position 239–242 (239–242 (DVGR)) interacts with substrate. FAD-binding positions include R267, Q278, and 335 to 339 (QIHGG). E362 serves as the catalytic Proton acceptor. G363 is a binding site for substrate. 364–366 (TSQ) serves as a coordination point for FAD.

The protein belongs to the acyl-CoA dehydrogenase family. As to quaternary structure, part of the homotrimeric caffeyl-CoA reductase-Etf complex composed of (R)-2-hydroxyisocaproyl-CoA dehydratase CarC, and the electron transfer flavoprotein (ETF) alpha (CarE) and beta (CarD) subunits. The cofactor is FAD.

It localises to the cytoplasm. It carries out the reaction hydrocaffeoyl-CoA + 2 reduced [2Fe-2S]-[ferredoxin] + 2 NAD(+) = (E)-caffeoyl-CoA + 2 oxidized [2Fe-2S]-[ferredoxin] + 2 NADH. Its function is as follows. The Caffeyl-CoA reductase-Etf complex catalyzes the reduction of caffeyl-CoA to yield hydrocaffeyl-CoA. It couples the endergonic ferredoxin reduction with NADH as reductant to the exergonic reduction of caffeoyl-CoA with the same reductant. It uses the mechanism of electron bifurcation to overcome the steep energy barrier in ferredoxin reduction. Also reduces 4-coumaroyl-CoA and feruloyl-CoA. The protein is Caffeyl-CoA reductase-Etf complex subunit CarC of Acetobacterium woodii (strain ATCC 29683 / DSM 1030 / JCM 2381 / KCTC 1655 / WB1).